The chain runs to 380 residues: Cytochrome b (380 aa).

Transmembrane regions (helical) follow at residues 33–53 (FGSLLGLCLVTQILTGLFLAM), 77–98 (WLIRNIHANGASFFFICLYLHV), 113–133 (WNIGVILLLLTMMTAFVGYVL), and 178–198 (FFAFHFLLPFVIAGASMIHLL). His83 and His97 together coordinate heme b. Heme b contacts are provided by His182 and His196. A ubiquinone is bound at residue His201. Helical transmembrane passes span 226 to 246 (YKDLLGFILMLVGLTSVALFS), 288 to 308 (LGGVLALLFSILVLMLVPMLH), 320 to 340 (LSQILFWALVADMLVLTWIGG), and 347 to 367 (FVLIGQAASTVYFALFLIALP).

The protein belongs to the cytochrome b family. In terms of assembly, the cytochrome bc1 complex contains 3 respiratory subunits (MT-CYB, CYC1 and UQCRFS1), 2 core proteins (UQCRC1 and UQCRC2) and probably 6 low-molecular weight proteins. The cofactor is heme b.

Its subcellular location is the mitochondrion inner membrane. In terms of biological role, component of the ubiquinol-cytochrome c reductase complex (complex III or cytochrome b-c1 complex) that is part of the mitochondrial respiratory chain. The b-c1 complex mediates electron transfer from ubiquinol to cytochrome c. Contributes to the generation of a proton gradient across the mitochondrial membrane that is then used for ATP synthesis. The chain is Cytochrome b (mt-cyb) from Acipenser persicus (Persian sturgeon).